Here is a 222-residue protein sequence, read N- to C-terminus: Ras-related protein Rab-41 (222 aa).

Residues Ser-41, Val-42, Gly-43, Lys-44, Thr-45, Ser-46, and Thr-63 each coordinate GTP. A Mg(2+)-binding site is contributed by Thr-45. Residues 58–66 (CACQATVGI) are switch-I. Positions 63 and 86 each coordinate Mg(2+). GTP contacts are provided by Gly-89, Asn-144, Lys-145, Asp-147, Ser-174, Ala-175, and Lys-176. The tract at residues 89–105 (GQERFHSLIPSYIRDST) is switch-II. Residue Cys-222 is the site of S-geranylgeranyl cysteine attachment.

It belongs to the small GTPase superfamily. Rab family. Mg(2+) is required as a cofactor. In terms of tissue distribution, widely expressed in brain, testis, lung, heart, ovary, colon, kidney, uterus and spleen but not in liver.

The protein resides in the cytoplasm. It catalyses the reaction GTP + H2O = GDP + phosphate + H(+). With respect to regulation, regulated by guanine nucleotide exchange factors (GEFs) which promote the exchange of bound GDP for free GTP. Regulated by GTPase activating proteins (GAPs) which increase the GTP hydrolysis activity. Inhibited by GDP dissociation inhibitors (GDIs). Functionally, the small GTPases Rab are key regulators of intracellular membrane trafficking, from the formation of transport vesicles to their fusion with membranes. Rabs cycle between an inactive GDP-bound form and an active GTP-bound form that is able to recruit to membranes different sets of downstream effectors directly responsible for vesicle formation, movement, tethering and fusion. RAB41 is required for normal Golgi ribbon organization and ER-to-Golgi trafficking. The protein is Ras-related protein Rab-41 of Homo sapiens (Human).